A 95-amino-acid polypeptide reads, in one-letter code: uncharacterized protein (95 aa).

A coiled-coil region spans residues 14-50; that stretch reads KMEQKLQEQLDGLLEKYTELLLGETNDELKEEVKQWI.

This is an uncharacterized protein from Bacillus subtilis (strain 168).